The primary structure comprises 618 residues: Mitochondrial Rho GTPase 2 (618 aa).

Residues 1-592 (MRRDVRILLL…ELHPSSFWLR (592 aa)) lie on the Cytoplasmic side of the membrane. The Miro 1 domain occupies 2–168 (RRDVRILLLG…FYYAQKAVLH (167 aa)). 4 residues coordinate GTP: Gly-16, Lys-17, Thr-18, and Ser-19. Thr-18 is a Mg(2+) binding site. Mg(2+) is bound by residues Pro-35 and Asp-57. Ser-59 is a binding site for GTP. Lys-96 is covalently cross-linked (Glycyl lysine isopeptide (Lys-Gly) (interchain with G-Cter in ubiquitin)). The GTP site is built by Asn-118, Lys-119, Asp-121, Ala-149, and Lys-150. Residue Lys-119 forms a Glycyl lysine isopeptide (Lys-Gly) (interchain with G-Cter in ubiquitin) linkage. Lys-164 is covalently cross-linked (Glycyl lysine isopeptide (Lys-Gly) (interchain with G-Cter in ubiquitin)). EF-hand domains lie at 184–219 (ACAQ…CFGH) and 304–339 (LGYQ…FPAA). Residues Asp-197, Asp-199, Asp-201, Glu-208, Asp-317, Asp-319, Asp-321, and Glu-328 each contribute to the Ca(2+) site. The Miro 2 domain occupies 414-576 (RSVLLCKVVG…FTQLATMAAF (163 aa)). GTP is bound by residues Gly-426, Gly-428, Lys-429, Ser-430, and Ala-431. GDP-binding residues include Gly-426, Gly-428, Lys-429, Ser-430, and Ala-431. Ser-430 contacts Mg(2+). Glu-471 serves as a coordination point for Mg(2+). The GTP site is built by Lys-525, Asp-527, and Cys-556. Residues Lys-525, Asp-527, and Cys-556 each contribute to the GDP site. A helical; Anchor for type IV membrane protein membrane pass occupies residues 593 to 615 (GLLGVVGAAVAAVLSFSLYRVLV). Residues 616 to 618 (KSQ) are Mitochondrial intermembrane-facing.

Belongs to the mitochondrial Rho GTPase family. In terms of assembly, homodimer. Interacts with the kinesin-binding proteins TRAK1/OIP106 and TRAK2/GRIF1, forming a link between mitochondria and the trafficking apparatus of the microtubules. Interacts with ARMCX3. Found in a complex with KIF5B, OGT, RHOT1 and TRAK1. In terms of processing, ubiquitinated by PRKN in a PINK1-dependent manner, leading to its degradation. In terms of tissue distribution, ubiquitously expressed. Highly expressed in heart, liver, skeletal muscle, kidney and pancreas.

The protein resides in the mitochondrion outer membrane. It catalyses the reaction GTP + H2O = GDP + phosphate + H(+). It carries out the reaction ATP + H2O = ADP + phosphate + H(+). The enzyme catalyses UTP + H2O = UDP + phosphate + H(+). Atypical mitochondrial nucleoside-triphosphatase (NTPase) involved in mitochondrial trafficking. Probably involved in control of anterograde transport of mitochondria and their subcellular distribution. Can hydrolyze GTP. Can hydrolyze ATP and UTP. The polypeptide is Mitochondrial Rho GTPase 2 (RHOT2) (Homo sapiens (Human)).